The primary structure comprises 299 residues: Peroxisomal biogenesis factor 19 (299 aa).

The interval 1–63 (MAAAEEGCSV…SPGDTAKDAL (63 aa)) is disordered. Ala2 carries the N-acetylalanine modification. Residues 2–56 (AAAEEGCSVGAEADRELEELLESALDDFDKAKPSPAPPSTTTAPDASGPQKRSPG) are docking to the peroxisome membrane and binding to PEX3. The tract at residues 2–91 (AAAEEGCSVG…QATAEFEKAM (90 aa)) is necessary for PEX19 function on peroxisome biogenesis. Residues 16–27 (RELEELLESALD) are compositionally biased toward acidic residues. Phosphoserine is present on residues Ser35, Ser54, and Ser66. Thr236 carries the phosphothreonine modification. Cys296 carries the post-translational modification Cysteine methyl ester. Residue Cys296 is the site of S-farnesyl cysteine attachment. The propeptide at 297–299 (LIM) is removed in mature form.

The protein belongs to the peroxin-19 family. As to quaternary structure, interacts with a broad range of peroxisomal membrane proteins, including PEX3, PEX10, PEX11A, PEX11B, PEX12, PEX13, PEX14 and PEX16, PXMP2/PMP22, PXMP4/PMP24, SLC25A17/PMP34, ABCD1/ALDP, ABCD2/ALDRP, and ABCD3/PMP70. Also interacts with the tumor suppressor CDKN2A/p19ARF. (Microbial infection) Interacts with human cytomegalovirus protein UL37 isoform vMIA; this interaction inhibits the peroxisomal-dependent antiviral signaling. Ubiquitously expressed. Isoform 1 is strongly predominant in all tissues except in utero where isoform 2 is the main form.

The protein localises to the cytoplasm. It localises to the peroxisome membrane. In terms of biological role, necessary for early peroxisomal biogenesis. Acts both as a cytosolic chaperone and as an import receptor for peroxisomal membrane proteins (PMPs). Binds and stabilizes newly synthesized PMPs in the cytoplasm by interacting with their hydrophobic membrane-spanning domains, and targets them to the peroxisome membrane by binding to the integral membrane protein PEX3. Excludes CDKN2A from the nucleus and prevents its interaction with MDM2, which results in active degradation of TP53. The sequence is that of Peroxisomal biogenesis factor 19 from Homo sapiens (Human).